An 83-amino-acid chain; its full sequence is Small ribosomal subunit protein uS17 (83 aa).

The protein belongs to the universal ribosomal protein uS17 family. Part of the 30S ribosomal subunit.

In terms of biological role, one of the primary rRNA binding proteins, it binds specifically to the 5'-end of 16S ribosomal RNA. The protein is Small ribosomal subunit protein uS17 of Zymomonas mobilis subsp. mobilis (strain ATCC 31821 / ZM4 / CP4).